Here is a 150-residue protein sequence, read N- to C-terminus: Transcription antitermination protein NusB (150 aa).

Belongs to the NusB family.

In terms of biological role, involved in transcription antitermination. Required for transcription of ribosomal RNA (rRNA) genes. Binds specifically to the boxA antiterminator sequence of the ribosomal RNA (rrn) operons. The sequence is that of Transcription antitermination protein NusB from Streptococcus pyogenes serotype M6 (strain ATCC BAA-946 / MGAS10394).